We begin with the raw amino-acid sequence, 239 residues long: tRNA (guanine-N(7)-)-methyltransferase (239 aa).

4 residues coordinate S-adenosyl-L-methionine: E68, E93, D120, and D143. Residue D143 is part of the active site. Substrate is bound by residues K147, D180, and 217 to 220 (TKFE).

This sequence belongs to the class I-like SAM-binding methyltransferase superfamily. TrmB family.

The catalysed reaction is guanosine(46) in tRNA + S-adenosyl-L-methionine = N(7)-methylguanosine(46) in tRNA + S-adenosyl-L-homocysteine. Its pathway is tRNA modification; N(7)-methylguanine-tRNA biosynthesis. In terms of biological role, catalyzes the formation of N(7)-methylguanine at position 46 (m7G46) in tRNA. The chain is tRNA (guanine-N(7)-)-methyltransferase from Vibrio vulnificus (strain CMCP6).